The primary structure comprises 206 residues: Pyridoxine/pyridoxamine 5'-phosphate oxidase (206 aa).

Residues 53-58 (RMVLLK), 68-69 (YT), Lys-75, and Gln-97 each bind FMN. Lys-58 serves as a coordination point for substrate. Substrate contacts are provided by Tyr-115, Arg-119, and Ser-123. FMN is bound by residues 132–133 (QS) and Trp-177. 183 to 185 (RLH) contributes to the substrate binding site. Arg-187 is a binding site for FMN.

It belongs to the pyridoxamine 5'-phosphate oxidase family. In terms of assembly, homodimer. The cofactor is FMN.

It catalyses the reaction pyridoxamine 5'-phosphate + O2 + H2O = pyridoxal 5'-phosphate + H2O2 + NH4(+). It carries out the reaction pyridoxine 5'-phosphate + O2 = pyridoxal 5'-phosphate + H2O2. The protein operates within cofactor metabolism; pyridoxal 5'-phosphate salvage; pyridoxal 5'-phosphate from pyridoxamine 5'-phosphate: step 1/1. Its pathway is cofactor metabolism; pyridoxal 5'-phosphate salvage; pyridoxal 5'-phosphate from pyridoxine 5'-phosphate: step 1/1. In terms of biological role, catalyzes the oxidation of either pyridoxine 5'-phosphate (PNP) or pyridoxamine 5'-phosphate (PMP) into pyridoxal 5'-phosphate (PLP). In Rhizobium meliloti (strain 1021) (Ensifer meliloti), this protein is Pyridoxine/pyridoxamine 5'-phosphate oxidase.